The chain runs to 151 residues: Transcriptional regulator MraZ (151 aa).

2 consecutive SpoVT-AbrB domains span residues 5–52 and 81–124; these read ATAV…PLMN and ATEC…SDVE.

Belongs to the MraZ family. As to quaternary structure, forms oligomers.

The protein localises to the cytoplasm. The protein resides in the nucleoid. The protein is Transcriptional regulator MraZ of Haemophilus influenzae (strain PittGG).